We begin with the raw amino-acid sequence, 429 residues long: Xaa-Pro dipeptidase (429 aa).

Aspartate 241, aspartate 252, histidine 334, glutamate 372, and glutamate 411 together coordinate Mn(2+).

The protein belongs to the peptidase M24B family. Bacterial-type prolidase subfamily. Mn(2+) serves as cofactor.

It carries out the reaction Xaa-L-Pro dipeptide + H2O = an L-alpha-amino acid + L-proline. Its function is as follows. Splits dipeptides with a prolyl residue in the C-terminal position. The sequence is that of Xaa-Pro dipeptidase from Marinobacter nauticus (strain ATCC 700491 / DSM 11845 / VT8) (Marinobacter aquaeolei).